Reading from the N-terminus, the 539-residue chain is Chaperonin GroEL (539 aa).

ATP is bound by residues 29-32 (TIGP), 86-90 (DGTTT), Gly413, 476-478 (NAA), and Asp492.

Belongs to the chaperonin (HSP60) family. In terms of assembly, forms a cylinder of 14 subunits composed of two heptameric rings stacked back-to-back. Interacts with the co-chaperonin GroES.

Its subcellular location is the cytoplasm. The enzyme catalyses ATP + H2O + a folded polypeptide = ADP + phosphate + an unfolded polypeptide.. Together with its co-chaperonin GroES, plays an essential role in assisting protein folding. The GroEL-GroES system forms a nano-cage that allows encapsulation of the non-native substrate proteins and provides a physical environment optimized to promote and accelerate protein folding. The polypeptide is Chaperonin GroEL (Leuconostoc mesenteroides subsp. mesenteroides (strain ATCC 8293 / DSM 20343 / BCRC 11652 / CCM 1803 / JCM 6124 / NCDO 523 / NBRC 100496 / NCIMB 8023 / NCTC 12954 / NRRL B-1118 / 37Y)).